The chain runs to 277 residues: Bis(5'-nucleosyl)-tetraphosphatase, symmetrical (277 aa).

It belongs to the Ap4A hydrolase family.

It carries out the reaction P(1),P(4)-bis(5'-adenosyl) tetraphosphate + H2O = 2 ADP + 2 H(+). In terms of biological role, hydrolyzes diadenosine 5',5'''-P1,P4-tetraphosphate to yield ADP. The chain is Bis(5'-nucleosyl)-tetraphosphatase, symmetrical from Methylobacillus flagellatus (strain ATCC 51484 / DSM 6875 / VKM B-1610 / KT).